Consider the following 188-residue polypeptide: dCTP deaminase (188 aa).

Residue 109–114 (KSTYAR) coordinates dCTP. The active-site Proton donor/acceptor is the glutamate 135. Residues glutamine 154, tyrosine 168, and glutamine 178 each contribute to the dCTP site.

Belongs to the dCTP deaminase family. Homotrimer.

It carries out the reaction dCTP + H2O + H(+) = dUTP + NH4(+). It participates in pyrimidine metabolism; dUMP biosynthesis; dUMP from dCTP (dUTP route): step 1/2. In terms of biological role, catalyzes the deamination of dCTP to dUTP. The chain is dCTP deaminase from Helicobacter hepaticus (strain ATCC 51449 / 3B1).